A 235-amino-acid chain; its full sequence is Calcium-activated potassium channel subunit beta-2 (235 aa).

The interval 1–45 (MFIWTSGRTSSSYRHDEKRNIYQKIRDHDLLDKRKTVTALKAGED) is ball and chain. Residues 1 to 46 (MFIWTSGRTSSSYRHDEKRNIYQKIRDHDLLDKRKTVTALKAGEDR) lie on the Cytoplasmic side of the membrane. The helical transmembrane segment at 47-67 (AILLGLAMMVCSIMMYFLLGI) threads the bilayer. Residues 68–194 (TLLRSYMQSV…VILTKLYSSN (127 aa)) lie on the Extracellular side of the membrane. N-linked (GlcNAc...) asparagine glycosylation is found at Asn-88, Asn-96, and Asn-119. A helical membrane pass occupies residues 195-215 (VLFHSLFWPTCMMAGGVAIVA). Residues 216-235 (MVKLTQYLSLLCERIQRINR) lie on the Cytoplasmic side of the membrane.

It belongs to the KCNMB (TC 8.A.14.1) family. KCNMB2 subfamily. In terms of assembly, interacts with KCNMA1 tetramer. There are probably 4 molecules of KCMNB2 per KCNMA1 tetramer. Post-translationally, N-glycosylated. In terms of tissue distribution, expressed in kidney, heart and brain. Highly expressed in ovary. Expressed at low level in other tissues.

It localises to the membrane. Regulatory subunit of the calcium activated potassium KCNMA1 (maxiK) channel. Modulates the calcium sensitivity and gating kinetics of KCNMA1, thereby contributing to KCNMA1 channel diversity. Acts as a negative regulator that confers rapid and complete inactivation of KCNMA1 channel complex. May participate in KCNMA1 inactivation in chromaffin cells of the adrenal gland or in hippocampal CA1 neurons. The protein is Calcium-activated potassium channel subunit beta-2 (KCNMB2) of Homo sapiens (Human).